A 409-amino-acid chain; its full sequence is Threonine dehydratase-like protein AKTS1-1 (409 aa).

A disordered region spans residues 1–21 (MADYLRQVMPENDSDSEALPR). The residue at position 111 (lysine 111) is an N6-(pyridoxal phosphate)lysine. Pyridoxal 5'-phosphate is bound by residues asparagine 138, 239–243 (GEGSL), and serine 368.

Belongs to the serine/threonine dehydratase family. Pyridoxal 5'-phosphate serves as cofactor.

The protein operates within mycotoxin biosynthesis. Threonine dehydratase-like protein; part of the gene clusters that mediate the biosynthesis of the host-selective toxins (HSTs) AK-toxins responsible for Japanese pear black spot disease by the Japanese pear pathotype. AK-toxins are esters of 9,10-epoxy 8-hydroxy 9-methyldecatrienoic acid (EDA). On cellular level, AK-toxins affect plasma membrane of susceptible cells and cause a sudden increase in loss of K(+) after a few minutes of toxin treatment. The acyl-CoA ligase AKT1, the hydrolase AKT2 and enoyl-CoA hydratase AKT3 are all involved in the biosynthesis of the AK-, AF- and ACT-toxin common 9,10-epoxy-8-hydroxy-9-methyl-decatrienoic acid (EDA) structural moiety. Part of the EDA biosynthesis occurs in the peroxisome since these 3 enzymes are localized in peroxisomes. The exact roles of the 3 enzymes, as well as of additional AK-toxin clusters enzymes, including AKT4, AKT6 and AKTS1, have still to be elucidated. The Cytochrome P450 monooxygenase AKT7 on the other side functions to limit production of EDA and AK-toxin, probably via the catalysis of a side reaction of EDA or its precursor. The polypeptide is Threonine dehydratase-like protein AKTS1-1 (Alternaria alternata (Alternaria rot fungus)).